We begin with the raw amino-acid sequence, 1780 residues long: Chitin synthase Vb (1780 aa).

Asparagine 133, asparagine 153, asparagine 629, asparagine 644, asparagine 655, and asparagine 660 each carry an N-linked (GlcNAc...) asparagine glycan. A run of 2 helical transmembrane segments spans residues 740 to 760 (AWIA…LKFI) and 776 to 796 (FVLF…IIGF). Positions 805–866 (NKAWNVKEVA…LSGMVMDNYF (62 aa)) constitute a Cytochrome b5 heme-binding domain. Asparagine 888 and asparagine 1009 each carry an N-linked (GlcNAc...) asparagine glycan. Residues 1046-1066 (LLLAFAIIICIVTAVKFLAAL) form a helical membrane-spanning segment. Asparagine 1411 carries an N-linked (GlcNAc...) asparagine glycan. The next 3 membrane-spanning stretches (helical) occupy residues 1442–1462 (LCGT…IYIL), 1469–1489 (IPYI…LIFI), and 1497–1517 (IGWM…LPLY). Asparagine 1524 carries N-linked (GlcNAc...) asparagine glycosylation. Positions 1649–1691 (TGVHDMRSQSPYQDYPGQHPSVSNLRGQANLSPATGGGHSRSG) are disordered. A compositionally biased stretch (polar residues) spans 1668–1681 (PSVSNLRGQANLSP). One can recognise a DEK-C domain in the interval 1722 to 1778 (GPNDMAIVESIRSVLCEVDLDTVTKKQVRALVEQRLQTELVGERRTFMDRQIDHELE).

This sequence belongs to the chitin synthase family. Class VII subfamily.

Its subcellular location is the cell membrane. It catalyses the reaction [(1-&gt;4)-N-acetyl-beta-D-glucosaminyl](n) + UDP-N-acetyl-alpha-D-glucosamine = [(1-&gt;4)-N-acetyl-beta-D-glucosaminyl](n+1) + UDP + H(+). Polymerizes chitin, a structural polymer of the cell wall and septum, by transferring the sugar moiety of UDP-GlcNAc to the non-reducing end of the growing chitin polymer. ChsV and chsVb do perform additive, but not redundant, functions in septum formation. Functions not only in the maintenance of cell wall integrity under different osmotic conditions but also in polarized cell wall synthesis. Plays an important role in the complex infection process of this fungus. The polypeptide is Chitin synthase Vb (Fusarium oxysporum f. sp. lycopersici (strain 4287 / CBS 123668 / FGSC 9935 / NRRL 34936) (Fusarium vascular wilt of tomato)).